Here is a 197-residue protein sequence, read N- to C-terminus: Protein RmlC homolog (197 aa).

The Proton acceptor role is filled by His76. Tyr140 functions as the Proton donor in the catalytic mechanism.

Functionally, could catalyze a 3,5-epimerization. The protein is Protein RmlC homolog (rfbC) of Streptococcus pyogenes serotype M6 (strain ATCC BAA-946 / MGAS10394).